Reading from the N-terminus, the 147-residue chain is IGCGRGCGGRGYGGLGYGGLGYGGLGYGGLGGGCGRGFSGGGLPVATASAAPTGLGIASENRYEGTVGVCGNLPFLGTAAVAGEFPTVGIGEILYGCGNGAVGITREGGLGYGAGYGGGYGLGYGGYGGGYGLGYGGYGGCGCGCGY.

Residues 1 to 38 form a left arm region; that stretch reads IGCGRGCGGRGYGGLGYGGLGYGGLGYGGLGGGCGRGF. A run of 4 repeats spans residues 11–15, 16–20, 21–25, and 26–30. The interval 11 to 30 is 4 X 5 AA tandem repeats of G-Y-G-G-L; that stretch reads GYGGLGYGGLGYGGLGYGGL. The segment at 39-107 is central domain; sequence SGGGLPVATA…GNGAVGITRE (69 aa). Residues 108 to 147 are right arm (Gly-rich tandem repeats); it reads GGLGYGAGYGGGYGLGYGGYGGGYGLGYGGYGGCGCGCGY.

The protein belongs to the chorion protein family.

Functionally, this protein is one of many from the eggshell of the silk moth. This Bombyx mori (Silk moth) protein is Chorion class B protein B.L1.